The chain runs to 331 residues: Adenosine deaminase (331 aa).

His12 and His14 together coordinate Zn(2+). His14, Asp16, and Gly170 together coordinate substrate. Residue His197 participates in Zn(2+) binding. Glu200 functions as the Proton donor in the catalytic mechanism. Zn(2+) is bound at residue Asp278. Asp279 contacts substrate.

This sequence belongs to the metallo-dependent hydrolases superfamily. Adenosine and AMP deaminases family. Adenosine deaminase subfamily. Zn(2+) serves as cofactor.

The catalysed reaction is adenosine + H2O + H(+) = inosine + NH4(+). It carries out the reaction 2'-deoxyadenosine + H2O + H(+) = 2'-deoxyinosine + NH4(+). In terms of biological role, catalyzes the hydrolytic deamination of adenosine and 2-deoxyadenosine. This is Adenosine deaminase from Shewanella baltica (strain OS223).